A 968-amino-acid chain; its full sequence is MSRIDSDLQKALKKACSVEETAPKRKHVRACIVYTWDHQSSKAVFTTLKTLPLANDEVQLFKMLIVLHKIIQEGHPSALAEAIRDRDWIRSLGRVHSGGSSYSKLIREYVRYLVLKLDFHAHHRGFNNGTFEYEEYVSLVSVSDPDEGYETILDLMSLQDSLDEFSQIIFASIQSERRNTECKISALIPLIAESYGIYKFITSMLRAMHRQLNDAEGDAALQPLKERYELQHARLFEFYADCSSVKYLTTLVTIPKLPVDAPDVFLINDVDESKEIKFKKREPSVTPARTPARTPTPTPPVVAEPAISPRPVSQRTTSTPTGYLQTMPTGATTGMMIPTATGAANAIFPQATAQMQPDFWANQQAQFANEQNRLEQERVQQLQQQQAQQELFQQQLQKAQQDMMNMQLQQQNQHQNDLIALTNQYEKDQALLQQYDQRVQQLESEITTMDSTASKQLANKDEQLTALQDQLDVWERKYESLAKLYSQLRQEHLNLLPRFKKLQLKVNSAQESIQKKEQLEHKLKQKDLQMAELVKDRDRARLELERSINNAEADSAAATAAAETMTQDKMNPILDAILESGINTIQESVYNLDSPLSWSGPLTPPTFLLSLLESTSENATEFATSFNNLIVDGLAHGDQTEVIHCVSDFSTSMATLVTNSKAYAVTTLPQEQSDQILTLVKRCAREAQYFFEDLMSENLNQVGDEEKTDIVINANVDMQEKLQELSLAIEPLLNIQSVKSNKETNPHSELVATADKIVKSSEHLRVDVPKPLLSLALMIIDAVVALVKAAIQCQNEIATTTSIPLNQFYLKNSRWTEGLISAAKAVAGATNVLITTASKLITSEDNENTSPEQFIVASKEVAASTIQLVAASRVKTSIHSKAQDKLEHCSKDVTDACRSLGNHVMGMIEDDHSTSQQQQPLDFTSEHTLKTAEMEQQVEILKLEQSLSNARKRLGEIRRHAYYNQDDD.

The region spanning 1–127 (MSRIDSDLQK…DFHAHHRGFN (127 aa)) is the ENTH domain. Residues 280–324 (KREPSVTPARTPARTPTPTPPVVAEPAISPRPVSQRTTSTPTGYL) form a disordered region. 2 positions are modified to phosphothreonine: threonine 294 and threonine 298. Serine 308 is modified (phosphoserine). The span at 311–324 (PVSQRTTSTPTGYL) shows a compositional bias: polar residues. Serine 555 carries the post-translational modification Phosphoserine. An I/LWEQ domain is found at 717-965 (DMQEKLQELS…EIRRHAYYNQ (249 aa)). A helical membrane pass occupies residues 772-791 (LLSLALMIIDAVVALVKAAI).

The protein belongs to the SLA2 family.

It localises to the cell membrane. It is found in the cytoplasm. The protein resides in the cytoskeleton. Its subcellular location is the actin patch. The protein localises to the cell cortex. It localises to the bud tip. Required for cellular morphogenesis and polarization of the cortical cytoskeleton. It might act in concert with proteins such as CDC42 and CDC43 to limit the region of cortical patch formation to the cortex of the bud. Required for the accumulation and/or maintenance of plasma membrane H(+)-ATPase on the cell surface. The chain is Protein SLA2 (SLA2) from Saccharomyces cerevisiae (strain ATCC 204508 / S288c) (Baker's yeast).